Consider the following 341-residue polypeptide: HTH-type transcriptional repressor PurR (341 aa).

In terms of domain architecture, HTH lacI-type spans Ala2–Val56. Residues Ile4 to Asn23 constitute a DNA-binding region (H-T-H motif). A DNA-binding region spans residues Ser48–Val56. Residues Tyr73, Arg190, Thr192, Phe221, and Asp275 each contribute to the hypoxanthine site.

As to quaternary structure, homodimer.

The protein operates within purine metabolism; purine nucleotide biosynthesis [regulation]. Is the main repressor of the genes involved in the de novo synthesis of purine nucleotides, regulating purB, purC, purEK, purF, purHD, purL, purMN and guaBA expression. PurR is allosterically activated to bind its cognate DNA by binding the purine corepressors, hypoxanthine or guanine, thereby effecting transcription repression. In Salmonella typhimurium (strain LT2 / SGSC1412 / ATCC 700720), this protein is HTH-type transcriptional repressor PurR.